We begin with the raw amino-acid sequence, 191 residues long: Large ribosomal subunit protein uL5 (191 aa).

This sequence belongs to the universal ribosomal protein uL5 family. As to quaternary structure, part of the 50S ribosomal subunit; part of the 5S rRNA/L5/L18/L25 subcomplex. Contacts the 5S rRNA and the P site tRNA. Forms a bridge to the 30S subunit in the 70S ribosome.

This is one of the proteins that bind and probably mediate the attachment of the 5S RNA into the large ribosomal subunit, where it forms part of the central protuberance. In the 70S ribosome it contacts protein S13 of the 30S subunit (bridge B1b), connecting the 2 subunits; this bridge is implicated in subunit movement. Contacts the P site tRNA; the 5S rRNA and some of its associated proteins might help stabilize positioning of ribosome-bound tRNAs. The sequence is that of Large ribosomal subunit protein uL5 from Micrococcus luteus (Micrococcus lysodeikticus).